Here is a 285-residue protein sequence, read N- to C-terminus: Bifunctional protein FolD (285 aa).

Residues 165–167, Ser190, and Ile231 each bind NADP(+); that span reads GRS.

Belongs to the tetrahydrofolate dehydrogenase/cyclohydrolase family. Homodimer.

It carries out the reaction (6R)-5,10-methylene-5,6,7,8-tetrahydrofolate + NADP(+) = (6R)-5,10-methenyltetrahydrofolate + NADPH. It catalyses the reaction (6R)-5,10-methenyltetrahydrofolate + H2O = (6R)-10-formyltetrahydrofolate + H(+). It functions in the pathway one-carbon metabolism; tetrahydrofolate interconversion. Catalyzes the oxidation of 5,10-methylenetetrahydrofolate to 5,10-methenyltetrahydrofolate and then the hydrolysis of 5,10-methenyltetrahydrofolate to 10-formyltetrahydrofolate. In Alkaliphilus oremlandii (strain OhILAs) (Clostridium oremlandii (strain OhILAs)), this protein is Bifunctional protein FolD.